The following is a 241-amino-acid chain: Biosynthetic peptidoglycan transglycosylase (241 aa).

The helical transmembrane segment at 18-38 (GVIGIIALWMAGILIFAFLPV) threads the bilayer.

Belongs to the glycosyltransferase 51 family.

The protein localises to the cell inner membrane. It carries out the reaction [GlcNAc-(1-&gt;4)-Mur2Ac(oyl-L-Ala-gamma-D-Glu-L-Lys-D-Ala-D-Ala)](n)-di-trans,octa-cis-undecaprenyl diphosphate + beta-D-GlcNAc-(1-&gt;4)-Mur2Ac(oyl-L-Ala-gamma-D-Glu-L-Lys-D-Ala-D-Ala)-di-trans,octa-cis-undecaprenyl diphosphate = [GlcNAc-(1-&gt;4)-Mur2Ac(oyl-L-Ala-gamma-D-Glu-L-Lys-D-Ala-D-Ala)](n+1)-di-trans,octa-cis-undecaprenyl diphosphate + di-trans,octa-cis-undecaprenyl diphosphate + H(+). It participates in cell wall biogenesis; peptidoglycan biosynthesis. Its function is as follows. Peptidoglycan polymerase that catalyzes glycan chain elongation from lipid-linked precursors. The protein is Biosynthetic peptidoglycan transglycosylase of Yersinia pseudotuberculosis serotype IB (strain PB1/+).